The primary structure comprises 433 residues: Phosphomethylpyrimidine synthase 2 (433 aa).

Substrate contacts are provided by residues asparagine 66, methionine 94, tyrosine 123, histidine 162, 184–186 (SRG), 225–228 (DALR), and glutamate 264. Zn(2+) is bound at residue histidine 268. Tyrosine 291 provides a ligand contact to substrate. Histidine 332 is a binding site for Zn(2+). [4Fe-4S] cluster is bound by residues cysteine 408, cysteine 411, and cysteine 415.

The protein belongs to the ThiC family. [4Fe-4S] cluster is required as a cofactor.

The catalysed reaction is 5-amino-1-(5-phospho-beta-D-ribosyl)imidazole + S-adenosyl-L-methionine = 4-amino-2-methyl-5-(phosphooxymethyl)pyrimidine + CO + 5'-deoxyadenosine + formate + L-methionine + 3 H(+). It functions in the pathway cofactor biosynthesis; thiamine diphosphate biosynthesis. Its function is as follows. Catalyzes the synthesis of the hydroxymethylpyrimidine phosphate (HMP-P) moiety of thiamine from aminoimidazole ribotide (AIR) in a radical S-adenosyl-L-methionine (SAM)-dependent reaction. This Saccharolobus solfataricus (strain ATCC 35092 / DSM 1617 / JCM 11322 / P2) (Sulfolobus solfataricus) protein is Phosphomethylpyrimidine synthase 2.